We begin with the raw amino-acid sequence, 1520 residues long: DNA topoisomerase 2 top-2 (1520 aa).

Residues 1 to 10 (MSDSDSEFSI) are compositionally biased toward acidic residues. Positions 1–40 (MSDSDSEFSIEDSPKKKTAPKKEKASPKKKKDDANESMVM) are disordered. Over residues 12–34 (DSPKKKTAPKKEKASPKKKKDDA) the composition is skewed to basic and acidic residues. ATP is bound by residues asparagine 126, asparagine 155, 183-185 (SSN), 196-203 (GRNGYGAK), and 411-413 (QTK). The Toprim domain maps to 490-607 (CTLILTEGDS…SLIQRNFVEE (118 aa)). 3 residues coordinate Mg(2+): glutamate 496, aspartate 576, and aspartate 578. The 470-residue stretch at 750–1219 (IPCLVDGFKP…TWQDLWHEDL (470 aa)) folds into the Topo IIA-type catalytic domain. Residue tyrosine 840 is the O-(5'-phospho-DNA)-tyrosine intermediate of the active site. Positions 1249 to 1520 (AADAKTGRGP…RGRVVDSDSD (272 aa)) are disordered. Residues 1283-1320 (TKAKYEKMSQPKKERVKKEPKEPKEPKKVKKEGQDIKK) are compositionally biased toward basic and acidic residues. The segment covering 1342–1364 (MSEESDVEFDEGIDFDSDDDGVE) has biased composition (acidic residues).

It belongs to the type II topoisomerase family. In terms of assembly, homodimer. Interacts with nmad-1; the interaction is required for localization of top-2 to DNA. Interacts with gcna-1; this interaction allows the resolution of topoisomerase 2 DNA-protein cross-links. It depends on Mg(2+) as a cofactor. Requires Mn(2+) as cofactor. Ca(2+) serves as cofactor. As to expression, expressed in the hermaphrodite and male germline.

The protein resides in the nucleus. It is found in the nucleoplasm. Its subcellular location is the chromosome. The protein localises to the cytoplasm. It localises to the cytoskeleton. The protein resides in the spindle. It carries out the reaction ATP-dependent breakage, passage and rejoining of double-stranded DNA.. Functionally, control of topological states of DNA by transient breakage and subsequent rejoining of DNA strands. Topoisomerase II makes double-strand breaks. Essential during mitosis in the adult germline and during embryogenesis for proper segregation of daughter chromosomes. Required for centromere resolution during mitosis. Required for chromosome segregation in anaphase of meiosis I during spermatogenesis. Promotes cleavage furrow stability during cytokinesis upon the presence of chromatin obstructions. Promotes DNA break formation upon zygotic genome activation in the Z2 and Z3 primordial germ cells in L1 larvae, thereby activating a checkpoint response. Essential for embryogenesis. The chain is DNA topoisomerase 2 top-2 from Caenorhabditis elegans.